Here is a 423-residue protein sequence, read N- to C-terminus: Polyglutamylase complex subunit TTLL1 (423 aa).

The region spanning 1-367 (MAGRVKWVTD…NGEIPDCKWN (367 aa)) is the TTL domain. Residues K138, 144 to 145 (QG), 181 to 184 (SLYI), and 194 to 196 (KFD) contribute to the ATP site. Q144 is a binding site for a protein. R220 is a binding site for L-glutamate. 241 to 242 (TN) is a binding site for ATP. L-glutamate is bound at residue K259. Mg(2+) contacts are provided by D313, E326, and N328. K344 lines the L-glutamate pocket. Residues 390–423 (DGAERELRSRPGQPVGPRTGRSRDSGRNVLTTWK) form a disordered region.

The protein belongs to the tubulin polyglutamylase family. Part of the neuronal tubulin polyglutamylase complex which contains TPGS1, TPGS2, TTLL1, LRRC49 and NICN1. Interacts with PCM1, CSTPP1 and LRRC49. The cofactor is Mg(2+).

It is found in the cytoplasm. It localises to the cytoskeleton. Its subcellular location is the cilium basal body. The protein resides in the cilium axoneme. The protein localises to the cell projection. It is found in the cilium. It localises to the flagellum. It carries out the reaction (L-glutamyl)(n)-gamma-L-glutamyl-L-glutamyl-[protein] + L-glutamate + ATP = (L-glutamyl)(n+1)-gamma-L-glutamyl-L-glutamyl-[protein] + ADP + phosphate + H(+). Functionally, catalytic subunit of a polyglutamylase complex which modifies tubulin, generating side chains of glutamate on the gamma-carboxyl group of specific glutamate residues within the C-terminal tail of tubulin. Probably involved in the side-chain elongation step of the polyglutamylation reaction rather than the initiation step. Modifies both alpha- and beta-tubulins with a preference for the alpha-tail. Unlike most polyglutamylases of the tubulin--tyrosine ligase family, only displays a catalytic activity when in complex with other proteins as it is most likely lacking domains important for autonomous activity. Part of the neuronal tubulin polyglutamylase complex. Mediates cilia and flagella polyglutamylation which is essential for their biogenesis and motility. Involved in respiratory motile cilia function through the regulation of beating asymmetry. Essential for sperm flagella biogenesis, motility and male fertility. Involved in KLF4 glutamylation which impedes its ubiquitination, thereby leading to somatic cell reprogramming, pluripotency maintenance and embryogenesis. This is Polyglutamylase complex subunit TTLL1 (Ttll1) from Rattus norvegicus (Rat).